A 407-amino-acid polypeptide reads, in one-letter code: Rubber oxygenase (407 aa).

The segment at residues 1-30 is a signal peptide (tat-type signal); sequence MDGFSRRRMLMTGGALGAVGALGAATRALA. His-198 provides a ligand contact to heme.

It belongs to the rubber oxygenase Lcp family. Heme b serves as cofactor. Post-translationally, exported by the Tat system. The position of the signal peptide cleavage has not been experimentally proven.

The protein localises to the secreted. It functions in the pathway biopolymer metabolism. Its function is as follows. Involved in the initial step of rubber degradation. Catalyzes the oxidative C-C cleavage of poly(cis-1,4-isoprene) in synthetic as well as in natural rubber by the addition of oxygen (O2) to the double bonds, leading to a mixture of oligonucleotide-isoprenoids with terminal keto and aldehyde groups (endo-type cleavage). The cleavage products are of different lengths, ranging from C20 (four isoprene units) to higher oligo-isoprenoids. Is not able to cleave low-molecular-weight substrate analogs with isoprenoid structure such as squalene (1,4-trans-isoprenoid), carotenoids, or alpha-tocopherol. This Streptomyces sp. (strain K30) protein is Rubber oxygenase.